Consider the following 511-residue polypeptide: MDRSESAESAESRRRRAEESGQGQLFRFWDELSPAEKEALLEQLEMLEPRELREHCQRAREAYVRESSAPQRLDDRMQPVPPEFLGSVRHSGTGELERWEREGFHQIAQNKVAVLLLAGGQGTRLGVTYPKGMYSVGLPSAKTLYQIQAERIRRLQQLASERHGETCTVPWYIMTSEFTLGPTRKFFEDHAYFGLERSDVVMFEQRMLPAVGFDGAAILEDKAKLAMAPDGNGGLYRALSDNRILEDMEGRGIQYVHVYCVDNILVKMADPVFIGFCVSKGADCGAKVVEKGYPAEPVGVVCRVDGVYQVVEYSEISPETAEKRNPNGALTFTAGNICNHFFTVPFLRAVIGSLEPRLNYHVAIKKVPYVDNEGNLVKPTSPNGIKMEKFVFDVFQFAKNFVAFEVLREEEFSPLKNADTADKDTPTTARRALLWQHYRWARRAGTHFLDETGSPIRDSHSISGEGDPPAVCEISPLVSYFGEGLESYMKDKDVSSFPFVLESSDAGPVPV.

Residues 1–19 (MDRSESAESAESRRRRAEE) show a composition bias toward basic and acidic residues. Positions 1–22 (MDRSESAESAESRRRRAEESGQ) are disordered. Residues 117 to 120 (LAGG) carry the Substrate binding motif. UTP-binding positions include 117-120 (LAGG), K131, Q205, and G231. N232 contributes to the substrate binding site. D262 contributes to the UTP binding site. The Substrate binding motif lies at 312–313 (EY). Residue K386 coordinates UTP. K416 provides a ligand contact to substrate.

The protein belongs to the UDPGP type 1 family.

This Xenopus tropicalis (Western clawed frog) protein is UDP-N-acetylhexosamine pyrophosphorylase-like protein 1 (uap1l1).